The sequence spans 54 residues: Large ribosomal subunit protein bL33 (54 aa).

It belongs to the bacterial ribosomal protein bL33 family.

This is Large ribosomal subunit protein bL33 from Corynebacterium urealyticum (strain ATCC 43042 / DSM 7109).